The following is a 214-amino-acid chain: Alkaline phosphatase-like protein (214 aa).

A run of 4 helical transmembrane segments spans residues 3 to 23, 48 to 68, 141 to 161, and 177 to 197; these read EIII…LIMI, LGII…ALIL, FLIL…SLGA, and YSSV…LLFV.

This sequence belongs to the DedA family.

The protein resides in the cell membrane. The sequence is that of Alkaline phosphatase-like protein (apl) from Lactococcus lactis subsp. cremoris (strain MG1363).